The sequence spans 462 residues: Lysyl endopeptidase (462 aa).

The signal sequence occupies residues 1–24 (MHKRTYLNACLVLALAAGASQALA). A propeptide spanning residues 25-211 (APGASEMAGD…VSYFADSLYK (187 aa)) is cleaved from the precursor. 3 cysteine pairs are disulfide-bonded: cysteine 224–cysteine 435, cysteine 230–cysteine 305, and cysteine 262–cysteine 284. Residues histidine 283, aspartate 333, and serine 409 each act as charge relay system in the active site.

Belongs to the peptidase S1 family. Experiments performed in E.coli. Processing of pro-endopeptidase to mature endopeptidase is probably autocatalytic, as mutations in the probable active site residues prevent processing, and purified inactive pro-endopeptidase disappears in the presence of active endopeptidase.

The protein resides in the secreted. It catalyses the reaction Preferential cleavage: Lys-|-Xaa, including Lys-|-Pro.. Its function is as follows. Lysine-specific endoprotease. Involved in corneal virulence. This is Lysyl endopeptidase (prpL) from Pseudomonas aeruginosa (strain ATCC 15692 / DSM 22644 / CIP 104116 / JCM 14847 / LMG 12228 / 1C / PRS 101 / PAO1).